The primary structure comprises 500 residues: L-arabinose isomerase (500 aa).

Mn(2+) contacts are provided by glutamate 306, glutamate 333, histidine 350, and histidine 450.

Belongs to the arabinose isomerase family. In terms of assembly, homohexamer. Mn(2+) serves as cofactor.

It catalyses the reaction beta-L-arabinopyranose = L-ribulose. The protein operates within carbohydrate degradation; L-arabinose degradation via L-ribulose; D-xylulose 5-phosphate from L-arabinose (bacterial route): step 1/3. Catalyzes the conversion of L-arabinose to L-ribulose. The protein is L-arabinose isomerase of Yersinia pseudotuberculosis serotype O:3 (strain YPIII).